A 193-amino-acid polypeptide reads, in one-letter code: Peptidyl-tRNA hydrolase (193 aa).

H17 serves as a coordination point for tRNA. The Proton acceptor role is filled by H22. Positions 68, 70, and 116 each coordinate tRNA.

Belongs to the PTH family. In terms of assembly, monomer.

It localises to the cytoplasm. The enzyme catalyses an N-acyl-L-alpha-aminoacyl-tRNA + H2O = an N-acyl-L-amino acid + a tRNA + H(+). Hydrolyzes ribosome-free peptidyl-tRNAs (with 1 or more amino acids incorporated), which drop off the ribosome during protein synthesis, or as a result of ribosome stalling. In terms of biological role, catalyzes the release of premature peptidyl moieties from peptidyl-tRNA molecules trapped in stalled 50S ribosomal subunits, and thus maintains levels of free tRNAs and 50S ribosomes. This is Peptidyl-tRNA hydrolase from Xanthomonas campestris pv. campestris (strain ATCC 33913 / DSM 3586 / NCPPB 528 / LMG 568 / P 25).